Consider the following 242-residue polypeptide: Protein HTATIP2 (242 aa).

Alanine 2 carries the N-acetylalanine modification. The required for interaction with elongation factor EEF1A1 stretch occupies residues 2 to 25 (ADKEALPKLREDFKMQNKSVFILG). The NADPH site is built by serine 27, glycine 28, glutamate 29, threonine 30, arginine 52, arginine 53, leucine 92, glycine 93, tyrosine 143, lysine 147, leucine 170, and arginine 178. Catalysis depends on tyrosine 143, which acts as the Proton acceptor. Lysine 147 is a catalytic residue.

Monomer. Forms homodimers during oxidative stress. Interacts (via N-terminus) with elongation factor EEF1A1 (via middle-region); the interaction is direct and competes with EEF1A1 binding to guanyl-nucleotide exchange factor EEF1B2, thereby inhibiting GDP for GTP exchange and reactivation of EEF1A1. Interacts with nuclear transport receptors XPO4, IPO5/RANBP5, IPO7, IPO9 and KPNB1 as well as GCN1L1/GCN1 and LRPPRC probably through their HEAT repeats. Binds NCOA5/CIA.

Its subcellular location is the cytoplasm. Represses translation by preventing reactivation of elongation factor eEF1A. May also inhibit nuclear import by competing with nuclear import substrates for binding to a subset of nuclear transport receptors. Has additionally been proposed to act as a redox sensor involved in cellular oxidative stress surveillance. In Mus musculus (Mouse), this protein is Protein HTATIP2.